Consider the following 485-residue polypeptide: MSDASSTAPSQAGATSQSTGSRTLLDKIWDQHLVHAPESGPAIIYIDLHLVHEVTSPQAFEGLRINNRPVRRPERTIATPDHNVPTSDRSLPIADPISRKQIETLRENCKEFGVQLFDIDDVRQGIVHVIGPENGYTQPGMTIVCGDSHTATHGAFGSLAFGIGTSEVEHVLATQTLLQFKPKTFELRVDGELARGVTAKDMILYLIGQIGTAGGTGYVLEFTGDAVRNLTMEERMTVCNMSIEAGARAGMIAPDQTTFDYLRGRPECPADFDAAVEAWKKLPSDPGATYDRSNLYKGSDIRPQVTWGTNPGQVCSVDSVVPSPGDSTDVNVQKSTASALQYMDLKAGTPITEIEINRVFIGSCTNARIEDLRAAAAVIKGHHCSDKVNAMIVPGSGKVKLQAEEEGLHKVFTDAGFDWREAGCSMCLAMNPDKLAPGERCASTSNRNFEGRQGKGGRTHLVSPAMAAAAAIKGHFVDIRDWDYR.

2 disordered regions span residues 1–20 and 73–92; these read MSDASSTAPSQAGATSQSTG and PERTIATPDHNVPTSDRSLP. Residues C364, C424, and C427 each contribute to the [4Fe-4S] cluster site.

Belongs to the aconitase/IPM isomerase family. LeuC type 1 subfamily. As to quaternary structure, heterodimer of LeuC and LeuD. Requires [4Fe-4S] cluster as cofactor.

The enzyme catalyses (2R,3S)-3-isopropylmalate = (2S)-2-isopropylmalate. The protein operates within amino-acid biosynthesis; L-leucine biosynthesis; L-leucine from 3-methyl-2-oxobutanoate: step 2/4. Its function is as follows. Catalyzes the isomerization between 2-isopropylmalate and 3-isopropylmalate, via the formation of 2-isopropylmaleate. This chain is 3-isopropylmalate dehydratase large subunit, found in Rhodopirellula baltica (strain DSM 10527 / NCIMB 13988 / SH1).